The following is a 64-amino-acid chain: Thrombin-like enzyme collinein-4 (64 aa).

Disulfide bonds link Cys-5/Cys-23 and Cys-34/Cys-51.

In terms of assembly, monomer. As to expression, expressed by the vanom gland.

It is found in the secreted. In terms of biological role, thrombin-like snake venom serine protease. The protein is Thrombin-like enzyme collinein-4 of Crotalus durissus collilineatus (Brazilian rattlesnake).